Reading from the N-terminus, the 552-residue chain is Cytochrome P450 monooxyhenase eriI (552 aa).

A helical transmembrane segment spans residues 9–26 (FALKASAAVAVLLLAAWV). N-linked (GlcNAc...) asparagine glycans are attached at residues asparagine 50 and asparagine 447. Cysteine 495 is a binding site for heme.

The protein belongs to the cytochrome P450 family. Heme is required as a cofactor.

The protein localises to the membrane. The enzyme catalyses (-)-cyatha-3,12-diene + reduced [NADPH--hemoprotein reductase] + O2 = erinacol + oxidized [NADPH--hemoprotein reductase] + H2O + H(+). It participates in secondary metabolite biosynthesis. Its function is as follows. Cytochrome P450 monooxygenase; part of the gene cluster that mediates the biosynthesis of erinacines, cyathane-xylosides that show unique biological activities, including leishmanicidal activity, stimulating activity for nerve growth-factor synthesis, and agonistic activity toward the kappa opioid receptor. Within the pathway, eriI hydroxylates cyatha-3,12-diene at C-14 of the seven-membered ring to yield erinacol. The first step of the erinacines biosynthesis pathway is catalyzed by the geranylgeranyl diphosphate (GGPP) synthase eriE via conversion of farnesyl pyrophosphate and isopentyl pyrophosphate into geranylgeranyl pyrophosphate (GGPP). GGPP is then substrate of the diterpene cyclase eriG for the production of cyatha-3,12-diene. The cytochrome P450 monooxygenase eriI then hydroxylates cyatha-3,12-diene at C-14 of the seven-membered ring to produce erinacol, which is further hydroxylated at C-15 by the cytochrome P450 monooxygenase eriC to yield cyathadiol. The cytochrome P450 monooxygenase eriA then catalyzes C-11 hydroxylation in the presence of the short chain dehydrogenase/reductase (SDR) eriH, which leads to the production of cyathatriol. The acetyltransferase eriL converts cyathatriol into 11-O-acetyl-cyathatriol. The SDR eriH catalyzes further oxidation of 11-O-acetyl-cyathatriol into 1-O-acetylcyathin A3. Finally, the glycosyl transferase eriJ tranfers xylose from UDP-xylose onto C-14 of 11-O-acetyl-cyathatriol to form eracine Q. EriJ is also able to convert 11-O-acetyl-cyathatriol to eracine Q2 by using UDP-D-glucose as cosubstrate, but at a lower rate. Cytochrome P450 monooxygenase; part of the gene cluster that mediates the biosynthesis of erinacines, cyathane-xylosides that show unique biological activities, including leishmanicidal activity, stimulating activity for nerve growth-factor synthesis, and agonistic activity toward the kappa opioid receptor. The geranylgeranyl diphosphate (GGPP) synthase eriE catalyzes the first step in erinacines biosynthesis via conversion of farnesyl pyrophosphate and isopentyl pyrophosphate into geranylgeranyl pyrophosphate (GGPP). GGPP is then substrate of the diterpene cyclase eriG for the production of cyatha-3,12-diene. EriG is unable to use geranyl diphosphate (GPP) or farnesyl diphosphate (FPP) as substrates. The cytochrome P450 monooxygenase eriI then hydroxylates cyatha-3,12-diene at C-14 of the seven-membered ring to produce erinacol, which is further hydroxylated at C-15 by the cytochrome P450 monooxygenase eriC to yield cyathadiol. The cytochrome P450 monooxygenase eriA then catalyzes C-11 hydroxylation in the presence of the short chain dehydrogenase/reductase (SDR) eriH, which leads to the production of cyathatriol. The acetyltransferase eriL converts cyathatriol into 11-O-acetyl-cyathatriol. The SDR eriH catalyzes further oxidation of 11-O-acetyl-cyathatriol into 1-O-acetylcyathin A3. Finally, the glycosyl transferase eriJ tranfers xylose from UDP-xylose onto C-14 of 11-O-acetyl-cyathatriol to form eracine Q. EriJ is also able to convert 11-O-acetyl-cyathatriol to eracine Q2 by using UDP-D-glucose as cosubstrate, but at a lower rate. In the absence of eriL and eriJ, the SDR eriH is able to convert cyathatriol to cyathin A3; this is likely a switching mechanism in the biosynthesis of cyathins (C-14 ketogroup)and erinacines (C-14 glycosylated group). The roles of the SDR eriB, the polyprenyl transferase eriF and the dehydrogenase eriK have still to be identified. The protein is Cytochrome P450 monooxyhenase eriI of Hericium erinaceus (Lion's mane mushroom).